The chain runs to 702 residues: MNSLFASTARGLEELLKTELENLGAVECQVVQGGVHFKGDTRLVYQSLMWSRLASRIMLPLGECKVYSDLDLYLGVQAINWTEMFNPGATFAVHFSGLNDTIRNSQYGAMKVKDAIVDAFTRKNLPRPNVDRDAPDIRVNVWLHKETASIALDLSGDGLHLRGYRDRAGIAPIKETLAAAIVMRSGWQPGTPLLDPMCGSGTLLIEAAMLATDRAPGLHRGRWGFSGWAQHDEAIWQEVKAEAQTRARKGLAEYSSHFYGSDSDARVIQRARTNARLAGIGELITFEVKDVAQLTNPLPKGPYGTVLSNPPYGERLDSEPALIALHSLLGRIMKNQFGGWNLSLFSASPDLLSCLQLRADKQYKAKNGPLDCVQKNYHVAESTPDSKPAMVAEDYANRLRKNLKKFEKWARQEGIECYRLYDADLPEYNVAVDRYADWVVVQEYAPPKTIDAHKARQRLFDIIAATISVLGIAPNKLVLKTRERQKGKNQYQKLGEKGEFLEVTEYNAHLLVNLTDYLDTGLFLDHRIARRMLGQMSKGKDFLNLFSYTGSATVHAGLGGARSTTTVDMSRTYLEWAERNLRLNGLTGRAHRLIQADCLAWLREANEQFDLIFIDPPTFSNSKRMEDAFDVQRDHLALMKDLKRLLRAGGTIMFSNNKRGFRMDLDGLAKLGLKAQEITQKTLSQDFARNRQIHNCWLITAA.

Residues 43–154 (LVYQSLMWSR…KETASIALDL (112 aa)) enclose the THUMP domain.

This sequence belongs to the methyltransferase superfamily. RlmKL family.

The protein localises to the cytoplasm. The catalysed reaction is guanosine(2445) in 23S rRNA + S-adenosyl-L-methionine = N(2)-methylguanosine(2445) in 23S rRNA + S-adenosyl-L-homocysteine + H(+). It carries out the reaction guanosine(2069) in 23S rRNA + S-adenosyl-L-methionine = N(2)-methylguanosine(2069) in 23S rRNA + S-adenosyl-L-homocysteine + H(+). Its function is as follows. Specifically methylates the guanine in position 2445 (m2G2445) and the guanine in position 2069 (m7G2069) of 23S rRNA. This chain is Ribosomal RNA large subunit methyltransferase K/L, found in Escherichia coli O139:H28 (strain E24377A / ETEC).